We begin with the raw amino-acid sequence, 463 residues long: MLPSQSPAIFTVSRLNQTVRLLLEREMGQVWISGEISNFSQPSSGHWYFTLKDDNAQVRCAMFRNSNRRVTFRPQHGQQVLVRANITLYEPRGDYQIIVESMQPAGEGLLQQKYEQLKAQLTAEGLFEQKHKQALPSPAHCVGVITSKTGAALHDILHVLRRRDPGLPVIIYPTAVQGDDAPGQIVRAIALANARQECDVLIVGRGGGSLEDLWSFNDERVARAIFASQIPIVSAVGHETDVTIADFVADLRAPTPSAAAEIVSRNQQELLRQLQSGQQRLEMAMDYFLASRQRRFTQLFHRLQQQHPQLRLARQQTALERLRQRMRIAVESQLKRAEQRQKRTVQRLDHYNPQPRIHRAQSRIQQLEYRLAENMRGRLSERRERFGNAVTHLEAVSPLATLARGYSVTSVNDGTVLKQTKQVKTGDLLTTRLKDGWVESEVKQIAPVKKTRARKPSPTKPAE.

It belongs to the XseA family. In terms of assembly, heterooligomer composed of large and small subunits.

It is found in the cytoplasm. The enzyme catalyses Exonucleolytic cleavage in either 5'- to 3'- or 3'- to 5'-direction to yield nucleoside 5'-phosphates.. Functionally, bidirectionally degrades single-stranded DNA into large acid-insoluble oligonucleotides, which are then degraded further into small acid-soluble oligonucleotides. This chain is Exodeoxyribonuclease 7 large subunit, found in Klebsiella pneumoniae (strain 342).